Consider the following 121-residue polypeptide: Small ribosomal subunit protein uS13 (121 aa).

The segment at 93-121 is disordered; it reads RGLPMRGQRTRTNARTRKGPRKSAAALKK.

Belongs to the universal ribosomal protein uS13 family. In terms of assembly, part of the 30S ribosomal subunit. Forms a loose heterodimer with protein S19. Forms two bridges to the 50S subunit in the 70S ribosome.

In terms of biological role, located at the top of the head of the 30S subunit, it contacts several helices of the 16S rRNA. In the 70S ribosome it contacts the 23S rRNA (bridge B1a) and protein L5 of the 50S subunit (bridge B1b), connecting the 2 subunits; these bridges are implicated in subunit movement. Contacts the tRNAs in the A and P-sites. The chain is Small ribosomal subunit protein uS13 from Methylibium petroleiphilum (strain ATCC BAA-1232 / LMG 22953 / PM1).